The primary structure comprises 379 residues: Homoserine O-succinyltransferase (379 aa).

An AB hydrolase-1 domain is found at 51 to 360 (NAVLICHALS…DAPQGHDAFL (310 aa)). Ser157 (nucleophile) is an active-site residue. Residue Arg227 participates in substrate binding. Residues Asp323 and His356 contribute to the active site. Position 357 (Asp357) interacts with substrate.

This sequence belongs to the AB hydrolase superfamily. MetX family. As to quaternary structure, homodimer.

Its subcellular location is the cytoplasm. It catalyses the reaction L-homoserine + succinyl-CoA = O-succinyl-L-homoserine + CoA. Its pathway is amino-acid biosynthesis; L-methionine biosynthesis via de novo pathway; O-succinyl-L-homoserine from L-homoserine: step 1/1. Transfers a succinyl group from succinyl-CoA to L-homoserine, forming succinyl-L-homoserine. This Pseudomonas syringae pv. tomato (strain ATCC BAA-871 / DC3000) protein is Homoserine O-succinyltransferase.